We begin with the raw amino-acid sequence, 1046 residues long: Translation initiation factor IF-2 (1046 aa).

A disordered region spans residues 49–450; sequence ALQQGNGGKA…GVMLPRGNGQ (402 aa). Composition is skewed to low complexity over residues 57–80 and 89–106; these read KAAP…ARPA and PAAA…AAPA. A compositionally biased stretch (pro residues) spans 107–128; that stretch reads APGPRPGPKPAPRPAPAAPAPA. The span at 129-169 shows a compositional bias: low complexity; sequence APEFTAPPSAPAAPAAAASGPRPGARPGAPKPGGARPATPG. Residues 177–194 are compositionally biased toward basic and acidic residues; that stretch reads RGERTDRGDRGDRGDRQG. Residues 195 to 214 are compositionally biased toward low complexity; sequence AARPGGQAPRPGARPAGPRP. Composition is skewed to gly residues over residues 239 to 248 and 266 to 280; these read PRPGGAGAPG and GGPG…GPGG. Positions 302–318 are enriched in low complexity; sequence GNRPNPGMMPQRPAAGP. Positions 319–414 are enriched in gly residues; sequence RPGGGGPGGR…GTQGAFGRPG (96 aa). The segment covering 418-427 has biased composition (basic residues); the sequence is RRGRKSKRQR. In terms of domain architecture, tr-type G spans 539-711; the sequence is ARPPVVTVMG…VVLTADASLD (173 aa). The segment at 548 to 555 is G1; it reads GHVDHGKT. Residue 548-555 participates in GTP binding; that stretch reads GHVDHGKT. Residues 573–577 are G2; it reads GITQH. Residues 598–601 form a G3 region; it reads DTPG. GTP-binding positions include 598–602 and 652–655; these read DTPGH and NKID. The interval 652–655 is G4; the sequence is NKID. A G5 region spans residues 688 to 690; the sequence is SAK.

Belongs to the TRAFAC class translation factor GTPase superfamily. Classic translation factor GTPase family. IF-2 subfamily.

The protein localises to the cytoplasm. Its function is as follows. One of the essential components for the initiation of protein synthesis. Protects formylmethionyl-tRNA from spontaneous hydrolysis and promotes its binding to the 30S ribosomal subunits. Also involved in the hydrolysis of GTP during the formation of the 70S ribosomal complex. The sequence is that of Translation initiation factor IF-2 from Streptomyces avermitilis (strain ATCC 31267 / DSM 46492 / JCM 5070 / NBRC 14893 / NCIMB 12804 / NRRL 8165 / MA-4680).